Reading from the N-terminus, the 216-residue chain is ATP-dependent Clp protease proteolytic subunit (216 aa).

Catalysis depends on Ser120, which acts as the Nucleophile. The active site involves His145.

It belongs to the peptidase S14 family. In terms of assembly, fourteen ClpP subunits assemble into 2 heptameric rings which stack back to back to give a disk-like structure with a central cavity, resembling the structure of eukaryotic proteasomes.

It localises to the cytoplasm. It carries out the reaction Hydrolysis of proteins to small peptides in the presence of ATP and magnesium. alpha-casein is the usual test substrate. In the absence of ATP, only oligopeptides shorter than five residues are hydrolyzed (such as succinyl-Leu-Tyr-|-NHMec, and Leu-Tyr-Leu-|-Tyr-Trp, in which cleavage of the -Tyr-|-Leu- and -Tyr-|-Trp bonds also occurs).. In terms of biological role, cleaves peptides in various proteins in a process that requires ATP hydrolysis. Has a chymotrypsin-like activity. Plays a major role in the degradation of misfolded proteins. The polypeptide is ATP-dependent Clp protease proteolytic subunit (Cupriavidus necator (strain ATCC 17699 / DSM 428 / KCTC 22496 / NCIMB 10442 / H16 / Stanier 337) (Ralstonia eutropha)).